Consider the following 337-residue polypeptide: Fructose-1,6-bisphosphatase class 1 (337 aa).

Mg(2+)-binding residues include Glu-89, Asp-112, Leu-114, and Asp-115. Residues 115–118 (DGSS), Asn-208, Tyr-241, and Lys-271 contribute to the substrate site. Glu-277 lines the Mg(2+) pocket.

Belongs to the FBPase class 1 family. Homotetramer. The cofactor is Mg(2+).

The protein resides in the cytoplasm. The catalysed reaction is beta-D-fructose 1,6-bisphosphate + H2O = beta-D-fructose 6-phosphate + phosphate. Its pathway is carbohydrate biosynthesis; gluconeogenesis. This is Fructose-1,6-bisphosphatase class 1 from Yersinia pseudotuberculosis serotype O:1b (strain IP 31758).